A 657-amino-acid chain; its full sequence is Macrolide export ATP-binding/permease protein MacB (657 aa).

The 238-residue stretch at 5 to 242 folds into the ABC transporter domain; sequence LELLDVHRTY…RAVTGESAFD (238 aa). Residue 41-48 participates in ATP binding; sequence GASGSGKS. 4 consecutive transmembrane segments (helical) span residues 276–296, 538–558, 596–616, and 620–640; these read FLSV…MALG, IAAI…LVSV, IGVF…GWAV, and LLSV…FGLW.

This sequence belongs to the ABC transporter superfamily. Macrolide exporter (TC 3.A.1.122) family. In terms of assembly, homodimer.

The protein resides in the cell inner membrane. Non-canonical ABC transporter that contains transmembrane domains (TMD), which form a pore in the inner membrane, and an ATP-binding domain (NBD), which is responsible for energy generation. Confers resistance against macrolides. The protein is Macrolide export ATP-binding/permease protein MacB of Chlorobium phaeobacteroides (strain DSM 266 / SMG 266 / 2430).